The sequence spans 31 residues: Cytochrome b6-f complex subunit 6 (31 aa).

The helical transmembrane segment at 3–23 threads the bilayer; it reads IAIDYFLLVGFCFAFTSGLYL.

Belongs to the PetL family. The 4 large subunits of the cytochrome b6-f complex are cytochrome b6, subunit IV (17 kDa polypeptide, PetD), cytochrome f and the Rieske protein, while the 4 small subunits are PetG, PetL, PetM and PetN. The complex functions as a dimer.

The protein localises to the plastid. Its subcellular location is the chloroplast thylakoid membrane. Functionally, component of the cytochrome b6-f complex, which mediates electron transfer between photosystem II (PSII) and photosystem I (PSI), cyclic electron flow around PSI, and state transitions. PetL is important for photoautotrophic growth as well as for electron transfer efficiency and stability of the cytochrome b6-f complex. The polypeptide is Cytochrome b6-f complex subunit 6 (Trieres chinensis (Marine centric diatom)).